A 436-amino-acid polypeptide reads, in one-letter code: Tol-Pal system protein TolB (436 aa).

The signal sequence occupies residues 1–28; it reads MMKCSFFRAILVAVGLMAAAVVATPANA.

It belongs to the TolB family. The Tol-Pal system is composed of five core proteins: the inner membrane proteins TolA, TolQ and TolR, the periplasmic protein TolB and the outer membrane protein Pal. They form a network linking the inner and outer membranes and the peptidoglycan layer.

The protein localises to the periplasm. Part of the Tol-Pal system, which plays a role in outer membrane invagination during cell division and is important for maintaining outer membrane integrity. In Rhizobium etli (strain CIAT 652), this protein is Tol-Pal system protein TolB.